Reading from the N-terminus, the 427-residue chain is 3-isopropylmalate dehydratase large subunit (427 aa).

[4Fe-4S] cluster-binding residues include Cys308, Cys368, and Cys371.

This sequence belongs to the aconitase/IPM isomerase family. LeuC type 2 subfamily. Heterodimer of LeuC and LeuD. [4Fe-4S] cluster serves as cofactor.

It carries out the reaction (2R,3S)-3-isopropylmalate = (2S)-2-isopropylmalate. It functions in the pathway amino-acid biosynthesis; L-leucine biosynthesis; L-leucine from 3-methyl-2-oxobutanoate: step 2/4. Its function is as follows. Catalyzes the isomerization between 2-isopropylmalate and 3-isopropylmalate, via the formation of 2-isopropylmaleate. This chain is 3-isopropylmalate dehydratase large subunit, found in Citrifermentans bemidjiense (strain ATCC BAA-1014 / DSM 16622 / JCM 12645 / Bem) (Geobacter bemidjiensis).